Reading from the N-terminus, the 365-residue chain is MNILKISKQTLRNNIKIIREYIGNAKMCFPVKANAYGHGIEDIVENTHDLVDFFAVANSLEAFRVTAVAKNPVLVFGVIYYEYIEKMISENIRVSIQDYEYIEKLEQIAKELDKKVYAHININTGMNRMGVDYNDACRTIQRAYESDWLILEGVYSHLACADNRDHPTNIKQKNRFDSIVKFTKGLSQDIICHLSNSYGFLGQKGICYDMVRPGILSYGFLPEFYVDRVIREIKPIARLLSKVVKIITLQEGEGVGYSLIYRGFEGEQLAVIPIGYGDGFPRELGDRGFVNINDVMYPMAGRMSMDGLTVSLGINEYDVKVGDTVELISAIPRNRNSAFSIAKQTNTIEYDIMSTLNNRIIRKII.

K32 serves as the catalytic Proton acceptor; specific for D-alanine. The residue at position 32 (K32) is an N6-(pyridoxal phosphate)lysine. Residue R128 participates in substrate binding. Y257 acts as the Proton acceptor; specific for L-alanine in catalysis. M305 provides a ligand contact to substrate.

It belongs to the alanine racemase family. It depends on pyridoxal 5'-phosphate as a cofactor.

It catalyses the reaction L-alanine = D-alanine. It participates in amino-acid biosynthesis; D-alanine biosynthesis; D-alanine from L-alanine: step 1/1. Functionally, catalyzes the interconversion of L-alanine and D-alanine. May also act on other amino acids. The polypeptide is Alanine racemase (alr) (Francisella tularensis subsp. holarctica (strain FTNF002-00 / FTA)).